We begin with the raw amino-acid sequence, 66 residues long: MNMRYTLMPERREGPVDPMPQSPSPSDEGGGPRRPETGSPDKDNLLKRMRKVDPKQAERYRQRTGE.

Positions 1-66 are disordered; it reads MNMRYTLMPE…AERYRQRTGE (66 aa). Residues 30–66 are compositionally biased toward basic and acidic residues; that stretch reads GGPRRPETGSPDKDNLLKRMRKVDPKQAERYRQRTGE. An Isoglutamyl lysine isopeptide (Glu-Lys) (interchain with K-? in acceptor proteins) cross-link involves residue Glu-66.

The protein belongs to the ubiquitin-like protein UBact family.

Functionally, may function as a protein modifier covalently attached to lysine residues of substrate proteins. This may serve to target the modified proteins for degradation by proteasomes. The protein is Prokaryotic ubiquitin-like protein UBact of Nitrospira moscoviensis.